Reading from the N-terminus, the 178-residue chain is MPSSALLYCLILLAGVRPSRGEYPRNESNCTHFPVSQTHMLRELRAAFSQVKTFFQKKDQLDNILLTDSLQQDFKGYLGCQALSEMIQFYLVEVMPQAENHGPEIKENLNSLGEKLKTLRMQLRRCHRFLPCENKSKAVEQVKNDFNKLQEKGVYKAMNEFDIFINCIEAYMTIKMKS.

The first 18 residues, 1-18, serve as a signal peptide directing secretion; sequence MPSSALLYCLILLAGVRP. 2 disulfides stabilise this stretch: C30-C126 and C80-C132. A glycan (N-linked (GlcNAc...) asparagine) is linked at N134.

This sequence belongs to the IL-10 family. In terms of assembly, homodimer. Interacts with IL10RA and IL10RB.

It is found in the secreted. Major immune regulatory cytokine that acts on many cells of the immune system where it has profound anti-inflammatory functions, limiting excessive tissue disruption caused by inflammation. Mechanistically, IL10 binds to its heterotetrameric receptor comprising IL10RA and IL10RB leading to JAK1 and STAT2-mediated phosphorylation of STAT3. In turn, STAT3 translocates to the nucleus where it drives expression of anti-inflammatory mediators. Targets antigen-presenting cells (APCs) such as macrophages and monocytes and inhibits their release of pro-inflammatory cytokines including granulocyte-macrophage colony-stimulating factor /GM-CSF, granulocyte colony-stimulating factor/G-CSF, IL-1 alpha, IL-1 beta, IL-6, IL-8 and TNF-alpha. Also interferes with antigen presentation by reducing the expression of MHC-class II and co-stimulatory molecules, thereby inhibiting their ability to induce T cell activation. In addition, controls the inflammatory response of macrophages by reprogramming essential metabolic pathways including mTOR signaling. The chain is Interleukin-10 (IL10) from Meriones unguiculatus (Mongolian jird).